The following is a 585-amino-acid chain: Arginine--tRNA ligase (585 aa).

Residues 131–141 (ANPTGPMHVGH) carry the 'HIGH' region motif.

This sequence belongs to the class-I aminoacyl-tRNA synthetase family. In terms of assembly, monomer.

The protein resides in the cytoplasm. It carries out the reaction tRNA(Arg) + L-arginine + ATP = L-arginyl-tRNA(Arg) + AMP + diphosphate. The chain is Arginine--tRNA ligase from Bartonella henselae (strain ATCC 49882 / DSM 28221 / CCUG 30454 / Houston 1) (Rochalimaea henselae).